Reading from the N-terminus, the 517-residue chain is MNKKDKKFNYIFGSEIVNDVKKRLPYYKSDWIDACHYRVLPACLNIYFSNLLPELAFALDMFAKTNNSFGVNEVLLASVLGSVVFALLSSQPLCIVGVTGPITVFNYTVYDIMHDRGTPYFPFLCWICLWSMIFHFIIAIANGVYFVKHITKFSCEIFGLYVAFIYLEKGVQVLCDQLKYGLTNTFLSITIALLFLMVGWLCDTVGKSSLFSYKVRILLLDYGLVASIIFFSGFQHIGKMREVSLAKLPTTKAFEPTLSRSWFIKFWKIPVGDVFLAIPFSIVLTILFYFDHNVSSVMAQDPSFPLTKPAGFHWDFFLLGITTGVSGILGIPAPNGLIPQAPMHTAALCVKRVDYDEDEIEKTHKEVIDRVVEQRASNFIQGLMTVGTMTGPLLLVLHQIPQCVLAGLFWVMGFSAIFGNGITQNVIWMLSDRKVVSKNHTLNHCSSKRVVWLYTILQLIGFGATFAITQVDKASIGFPIIILLLIPFRTYCMPKWFLEEDLEILDENVGIIAYQKV.

11 helical membrane-spanning segments follow: residues S68–L88, L93–M113, F121–A141, C155–C175, F186–G206, I217–I237, I269–Y289, G311–I331, S377–L397, C403–T423, and R449–V471.

This sequence belongs to the anion exchanger (TC 2.A.31) family.

The protein localises to the vacuole membrane. This Schizosaccharomyces pombe (strain 972 / ATCC 24843) (Fission yeast) protein is Putative transporter C543.05c.